We begin with the raw amino-acid sequence, 258 residues long: Global transcriptional regulator CodY (258 aa).

Residues 1–156 (MSTLLSKTRR…SATIVGMELL (156 aa)) form a GAF domain region. Positions 204 to 223 (ASKIADKVGITRSVIVNALR) form a DNA-binding region, H-T-H motif.

This sequence belongs to the CodY family.

It localises to the cytoplasm. DNA-binding global transcriptional regulator which is involved in the adaptive response to starvation and acts by directly or indirectly controlling the expression of numerous genes in response to nutrient availability. During rapid exponential growth, CodY is highly active and represses genes whose products allow adaptation to nutrient depletion. The protein is Global transcriptional regulator CodY of Clostridium perfringens (strain SM101 / Type A).